The primary structure comprises 507 residues: Cytochrome P450 monooxygenase cloA (507 aa).

Residues 15–35 (WTWILLTTCIALISPLVLKGI) traverse the membrane as a helical segment. Asparagine 247 carries an N-linked (GlcNAc...) asparagine glycan. Cysteine 450 contacts heme.

The protein belongs to the cytochrome P450 family. Requires heme as cofactor.

It is found in the membrane. The protein operates within alkaloid biosynthesis; ergot alkaloid biosynthesis. Functionally, cytochrome P450 monooxygenase; part of the gene cluster that mediates the biosynthesis of fungal ergot alkaloid. DmaW catalyzes the first step of ergot alkaloid biosynthesis by condensing dimethylallyl diphosphate (DMAP) and tryptophan to form 4-dimethylallyl-L-tryptophan. The second step is catalyzed by the methyltransferase easF that methylates 4-dimethylallyl-L-tryptophan in the presence of S-adenosyl-L-methionine, resulting in the formation of 4-dimethylallyl-L-abrine. The catalase easC and the FAD-dependent oxidoreductase easE then transform 4-dimethylallyl-L-abrine to chanoclavine-I which is further oxidized by easD in the presence of NAD(+), resulting in the formation of chanoclavine-I aldehyde. Agroclavine dehydrogenase easG then mediates the conversion of chanoclavine-I aldehyde to agroclavine via a non-enzymatic adduct reaction: the substrate is an iminium intermediate that is formed spontaneously from chanoclavine-I aldehyde in the presence of glutathione. The presence of easA is not required to complete this reaction. Further conversion of agroclavine to paspalic acid is a two-step process involving oxidation of agroclavine to elymoclavine and of elymoclavine to paspalic acid, the second step being performed by the elymoclavine oxidase cloA. Paspalic acid is then further converted to D-lysergic acid. Ergopeptines are assembled from D-lysergic acid and three different amino acids by the D-lysergyl-peptide-synthetases composed each of a monomudular and a trimodular nonribosomal peptide synthetase subunit. LpsB and lpsC encode the monomodular subunits responsible for D-lysergic acid activation and incorporation into the ergopeptine backbone. LpsA1 and A2 subunits encode the trimodular nonribosomal peptide synthetase assembling the tripeptide portion of ergopeptines. LpsA1 is responsible for formation of the major ergopeptine, ergotamine, and lpsA2 for alpha-ergocryptine, the minor ergopeptine of the total alkaloid mixture elaborated by C.purpurea. D-lysergyl-tripeptides are assembled by the nonribosomal peptide synthetases and released as N-(D-lysergyl-aminoacyl)-lactams. Cyclolization of the D-lysergyl-tripeptides is performed by the Fe(2+)/2-ketoglutarate-dependent dioxygenase easH which introduces a hydroxyl group into N-(D-lysergyl-aminoacyl)-lactam at alpha-C of the aminoacyl residue followed by spontaneous condensation with the terminal lactam carbonyl group. This chain is Cytochrome P450 monooxygenase cloA, found in Claviceps purpurea (strain 20.1) (Ergot fungus).